Reading from the N-terminus, the 108-residue chain is Anti-sigma-B factor antagonist (108 aa).

One can recognise an STAS domain in the interval 3–108 (LNIETITHDD…MHVNEGTEVE (106 aa)). Phosphoserine is present on serine 57.

Belongs to the anti-sigma-factor antagonist family. Phosphorylated by RsbW on a serine residue.

Its function is as follows. Positive regulator of sigma-B activity. Non-phosphorylated RsbV binds to RsbW, preventing its association with sigma-B. When phosphorylated, releases RsbW, which is then free to complex with and inactivate sigma-B. This is Anti-sigma-B factor antagonist (rsbV) from Staphylococcus epidermidis.